Here is a 456-residue protein sequence, read N- to C-terminus: Bifunctional protein GlmU (456 aa).

The pyrophosphorylase stretch occupies residues 1 to 230 (MDKRFAVVLA…FQETLGVNDR (230 aa)). Residues 9-12 (LAAG), Lys23, Gln73, and 78-79 (GT) contribute to the UDP-N-acetyl-alpha-D-glucosamine site. Asp103 contacts Mg(2+). 4 residues coordinate UDP-N-acetyl-alpha-D-glucosamine: Gly140, Glu155, Asn170, and Asn228. Asn228 provides a ligand contact to Mg(2+). Positions 231–251 (VALSQAEQFMKERINKRHMQN) are linker. The tract at residues 252-456 (GVTLIDPMNT…DDYVKNIHKK (205 aa)) is N-acetyltransferase. Arg333 and Lys351 together coordinate UDP-N-acetyl-alpha-D-glucosamine. His363 (proton acceptor) is an active-site residue. Residues Tyr366 and Asn377 each contribute to the UDP-N-acetyl-alpha-D-glucosamine site. Acetyl-CoA contacts are provided by residues 386–387 (NY), Ala423, and Arg440.

The protein in the N-terminal section; belongs to the N-acetylglucosamine-1-phosphate uridyltransferase family. This sequence in the C-terminal section; belongs to the transferase hexapeptide repeat family. As to quaternary structure, homotrimer. Requires Mg(2+) as cofactor.

It localises to the cytoplasm. It carries out the reaction alpha-D-glucosamine 1-phosphate + acetyl-CoA = N-acetyl-alpha-D-glucosamine 1-phosphate + CoA + H(+). It catalyses the reaction N-acetyl-alpha-D-glucosamine 1-phosphate + UTP + H(+) = UDP-N-acetyl-alpha-D-glucosamine + diphosphate. It participates in nucleotide-sugar biosynthesis; UDP-N-acetyl-alpha-D-glucosamine biosynthesis; N-acetyl-alpha-D-glucosamine 1-phosphate from alpha-D-glucosamine 6-phosphate (route II): step 2/2. Its pathway is nucleotide-sugar biosynthesis; UDP-N-acetyl-alpha-D-glucosamine biosynthesis; UDP-N-acetyl-alpha-D-glucosamine from N-acetyl-alpha-D-glucosamine 1-phosphate: step 1/1. It functions in the pathway bacterial outer membrane biogenesis; LPS lipid A biosynthesis. Its function is as follows. Catalyzes the last two sequential reactions in the de novo biosynthetic pathway for UDP-N-acetylglucosamine (UDP-GlcNAc). The C-terminal domain catalyzes the transfer of acetyl group from acetyl coenzyme A to glucosamine-1-phosphate (GlcN-1-P) to produce N-acetylglucosamine-1-phosphate (GlcNAc-1-P), which is converted into UDP-GlcNAc by the transfer of uridine 5-monophosphate (from uridine 5-triphosphate), a reaction catalyzed by the N-terminal domain. The chain is Bifunctional protein GlmU from Bacillus subtilis (strain 168).